The primary structure comprises 406 residues: Tyrosine--tRNA ligase (406 aa).

Tyr-35 lines the L-tyrosine pocket. The 'HIGH' region signature appears at 40 to 49 (ATSTSLHIGH). L-tyrosine contacts are provided by Tyr-166 and Gln-170. A 'KMSKS' region motif is present at residues 226 to 230 (KMGKS). Lys-229 provides a ligand contact to ATP. The region spanning 341-405 (ILLIDLMVLS…IGKKRILRVI (65 aa)) is the S4 RNA-binding domain.

Belongs to the class-I aminoacyl-tRNA synthetase family. TyrS type 1 subfamily. As to quaternary structure, homodimer.

It localises to the cytoplasm. It catalyses the reaction tRNA(Tyr) + L-tyrosine + ATP = L-tyrosyl-tRNA(Tyr) + AMP + diphosphate + H(+). Functionally, catalyzes the attachment of tyrosine to tRNA(Tyr) in a two-step reaction: tyrosine is first activated by ATP to form Tyr-AMP and then transferred to the acceptor end of tRNA(Tyr). This Borrelia turicatae (strain 91E135) protein is Tyrosine--tRNA ligase.